The sequence spans 111 residues: Disintegrin lebein-1-alpha (111 aa).

The first 20 residues, 1–20 (MIQVLLVTICLAVFPYQGSS), serve as a signal peptide directing secretion. The propeptide occupies 21–47 (IILESGNVNDYEIVYPKKVTVLPTGAM). The Disintegrin domain occupies 47–111 (MNSGNPCCDP…SDCPRNPYKD (65 aa)). Disulfide bonds link cysteine 53-cysteine 76, cysteine 67-cysteine 73, cysteine 72-cysteine 97, and cysteine 85-cysteine 104. Residues 89–91 (RGD) carry the Cell attachment site motif.

It belongs to the disintegrin family. Dimeric disintegrin subfamily. As to quaternary structure, heterodimer with subunit beta; disulfide-linked. Expressed by the venom gland.

The protein resides in the secreted. In terms of biological role, strongly inhibits ADP-induced platelet aggregation on human platelet-rich plasma. Also avidly binds to the laminin-binding beta-1 integrins (alpha-3/beta-1, alpha-6/beta-1, and alpha-7/beta-1) in an RGD-independent manner. The sequence is that of Disintegrin lebein-1-alpha from Macrovipera lebetinus (Levantine viper).